Consider the following 116-residue polypeptide: Large ribosomal subunit protein bL20c (116 aa).

It belongs to the bacterial ribosomal protein bL20 family.

The protein localises to the plastid. The protein resides in the chloroplast. In terms of biological role, binds directly to 23S ribosomal RNA and is necessary for the in vitro assembly process of the 50S ribosomal subunit. It is not involved in the protein synthesizing functions of that subunit. This is Large ribosomal subunit protein bL20c from Oltmannsiellopsis viridis (Marine flagellate).